Reading from the N-terminus, the 308-residue chain is Transcriptional adapter 1-1 (308 aa).

The protein belongs to the TADA1 family. As to quaternary structure, component of the Spt-Ada-Gcn5 acetyltransferase (SAGA) complex consisting of wda/Taf5L, Saf6, Taf9, Taf10b, Taf12, Ada1, Spt3, Spt7, Spt20, Sf3b3, Sf3b5, Nipped-A/Tra1, a histone acetyltransferase (HAT) module made up of Gcn5, Ada2b (Isoform B), Ada3 and Sgf29, and a deubiquitinase (DUB) module made up of not/nonstop, Sgf11 and e(y)2 tethered to SAGA by Atxn7. Not a component of the Ada2a-containing ATAC complex.

The protein localises to the nucleus. Its function is as follows. Component of the transcription regulatory complex SAGA, a multiprotein complex that activates transcription by remodeling chromatin and mediating histone acetylation and deubiquitination. The SAGA complex predominantly acetylates histone H3. This chain is Transcriptional adapter 1-1, found in Drosophila melanogaster (Fruit fly).